Consider the following 247-residue polypeptide: MIPYVKMMPYVNEYDTPECKTLAETAKKSIRTPESLGLDRCIQCGACTASCPAARFTDYSPRQIVKKVLENDRSVLESEMIWSCFYCYSCNLRCPRNNSPVTIVQVLRQMAINEGIRVEKLAYFLEIGEHLGENGASKVPGAGIKNMEKDLGERWIGIKRKLEPIRSELGLSARDVRNTHGEVQAILESTGYFEREKWIKARVQEKGIRGFLKTDRTGTSCTEKKKNSGDLGFESDREYTGQEALTV.

In terms of domain architecture, 4Fe-4S ferredoxin-type spans 32-62; the sequence is TPESLGLDRCIQCGACTASCPAARFTDYSPR. [4Fe-4S] cluster-binding residues include Cys-41, Cys-44, Cys-47, Cys-51, Cys-84, Cys-87, Cys-90, and Cys-94. Over residues 216 to 240 the composition is skewed to basic and acidic residues; it reads RTGTSCTEKKKNSGDLGFESDREYT. Residues 216-247 are disordered; it reads RTGTSCTEKKKNSGDLGFESDREYTGQEALTV.

It belongs to the HdrC family. In terms of assembly, the ferredoxin:CoB-CoM heterodisulfide reductase is composed of three subunits; HdrA1, HdrB1 and HdrC1. [4Fe-4S] cluster is required as a cofactor.

The protein resides in the cytoplasm. It carries out the reaction coenzyme B + coenzyme M + 2 oxidized [2Fe-2S]-[ferredoxin] = coenzyme M-coenzyme B heterodisulfide + 2 reduced [2Fe-2S]-[ferredoxin] + 2 H(+). Its pathway is cofactor metabolism; coenzyme M-coenzyme B heterodisulfide reduction; coenzyme B and coenzyme M from coenzyme M-coenzyme B heterodisulfide: step 1/1. In terms of biological role, part of a complex that catalyzes the reversible reduction of CoM-S-S-CoB to the thiol-coenzymes H-S-CoM (coenzyme M) and H-S-CoB (coenzyme B). Probably involved in methylotrophic methanogenesis but not in aceticlastic methanogenesis. This chain is Ferredoxin:CoB-CoM heterodisulfide reductase subunit C, found in Methanosarcina acetivorans (strain ATCC 35395 / DSM 2834 / JCM 12185 / C2A).